The sequence spans 178 residues: Bifunctional protein PyrR (178 aa).

The short motif at 99–111 is the PRPP-binding element; it reads VILVDDVLFTGRT.

This sequence belongs to the purine/pyrimidine phosphoribosyltransferase family. PyrR subfamily. In terms of assembly, homodimer and homohexamer; in equilibrium.

The enzyme catalyses UMP + diphosphate = 5-phospho-alpha-D-ribose 1-diphosphate + uracil. Its function is as follows. Regulates transcriptional attenuation of the pyrimidine nucleotide (pyr) operon by binding in a uridine-dependent manner to specific sites on pyr mRNA. This disrupts an antiterminator hairpin in the RNA and favors formation of a downstream transcription terminator, leading to a reduced expression of downstream genes. Functionally, also displays a weak uracil phosphoribosyltransferase activity which is not physiologically significant. In Limosilactobacillus reuteri subsp. reuteri (strain JCM 1112) (Lactobacillus reuteri), this protein is Bifunctional protein PyrR.